The chain runs to 910 residues: Bifunctional glucose-6-phosphate 1-dehydrogenase/6-phosphogluconolactonase (910 aa).

Residues 1–170 (MDYENFVKSA…DFHIASLFPN (170 aa)) are 6-phosphogluconolactonase. A linker region spans residues 171 to 276 (IFYNIYMNNY…PATYLIDTSC (106 aa)). The segment at 277–910 (TNENVNINNN…FYEDDLLDIN (634 aa)) is glucose-6-phosphate 1-dehydrogenase. Residues 345–352 (GCSGDLAK), arginine 379, and lysine 548 each bind NADP(+). D-glucose 6-phosphate contacts are provided by residues lysine 548, 578–582 (HYLGK), glutamate 616, and aspartate 635. The active-site Proton acceptor is histidine 640. The segment at 689–711 (ENFKEDENNDDESKKNHSYHDDP) is disordered. Lysine 742 lines the NADP(+) pocket. D-glucose 6-phosphate is bound at residue lysine 745. Arginine 755 contacts NADP(+). Glutamine 779 is a D-glucose 6-phosphate binding site. An NADP(+)-binding site is contributed by 785-787 (YLK).

This sequence in the N-terminal section; belongs to the glucosamine/galactosamine-6-phosphate isomerase family. 6-phosphogluconolactonase subfamily. It in the C-terminal section; belongs to the glucose-6-phosphate dehydrogenase family. Homotetramer.

It catalyses the reaction 6-phospho-D-glucono-1,5-lactone + H2O = 6-phospho-D-gluconate + H(+). The catalysed reaction is D-glucose 6-phosphate + NADP(+) = 6-phospho-D-glucono-1,5-lactone + NADPH + H(+). It functions in the pathway carbohydrate degradation; pentose phosphate pathway; D-ribulose 5-phosphate from D-glucose 6-phosphate (oxidative stage): step 1/3. The protein operates within carbohydrate degradation; pentose phosphate pathway; D-ribulose 5-phosphate from D-glucose 6-phosphate (oxidative stage): step 2/3. G6PD activity is inhibited by glucosamine-6-phosphate, NADPH, and 4-(4-bromophenyl)-7-(3,4-dimethoxyphenyl)-4,6,7,8-tetrahydroquinoline-2,5(1 H,3H)-dione. G6PD and 6PGL activities can be reversibly inhibited by S-glutathionylation (in vitro). Functionally, bifunctional enzyme which catalyzes the first two steps of the oxidative pentose-phosphate pathway, which represents a route for the dissimilation of carbohydrates besides glycolysis. The main function of this enzyme is to provide reducing power (NADPH) and pentose phosphates for fatty acid and nucleic acid synthesis. The protein is Bifunctional glucose-6-phosphate 1-dehydrogenase/6-phosphogluconolactonase of Plasmodium falciparum (isolate 3D7).